The primary structure comprises 567 residues: Proline--tRNA ligase (567 aa).

This sequence belongs to the class-II aminoacyl-tRNA synthetase family. ProS type 1 subfamily. Homodimer.

It is found in the cytoplasm. It carries out the reaction tRNA(Pro) + L-proline + ATP = L-prolyl-tRNA(Pro) + AMP + diphosphate. Its function is as follows. Catalyzes the attachment of proline to tRNA(Pro) in a two-step reaction: proline is first activated by ATP to form Pro-AMP and then transferred to the acceptor end of tRNA(Pro). As ProRS can inadvertently accommodate and process non-cognate amino acids such as alanine and cysteine, to avoid such errors it has two additional distinct editing activities against alanine. One activity is designated as 'pretransfer' editing and involves the tRNA(Pro)-independent hydrolysis of activated Ala-AMP. The other activity is designated 'posttransfer' editing and involves deacylation of mischarged Ala-tRNA(Pro). The misacylated Cys-tRNA(Pro) is not edited by ProRS. The sequence is that of Proline--tRNA ligase from Staphylococcus aureus (strain Mu3 / ATCC 700698).